The following is a 597-amino-acid chain: Elongation factor 4 (597 aa).

The tr-type G domain maps to 2–184 (KNIRNFSIIA…EIVAKIPAPT (183 aa)). GTP-binding positions include 14 to 19 (DHGKST) and 131 to 134 (NKID).

It belongs to the TRAFAC class translation factor GTPase superfamily. Classic translation factor GTPase family. LepA subfamily.

It is found in the cell inner membrane. It catalyses the reaction GTP + H2O = GDP + phosphate + H(+). Functionally, required for accurate and efficient protein synthesis under certain stress conditions. May act as a fidelity factor of the translation reaction, by catalyzing a one-codon backward translocation of tRNAs on improperly translocated ribosomes. Back-translocation proceeds from a post-translocation (POST) complex to a pre-translocation (PRE) complex, thus giving elongation factor G a second chance to translocate the tRNAs correctly. Binds to ribosomes in a GTP-dependent manner. The polypeptide is Elongation factor 4 (Neisseria meningitidis serogroup C (strain 053442)).